Here is a 326-residue protein sequence, read N- to C-terminus: DNA polymerase III subunit delta' (326 aa).

DNA polymerase III contains a core (composed of alpha, epsilon and theta chains) that associates with a tau subunit. This core dimerizes to form the POLIII' complex. PolIII' associates with the gamma complex (composed of gamma, delta, delta', psi and chi chains) and with the beta chain to form the complete DNA polymerase III complex.

The enzyme catalyses DNA(n) + a 2'-deoxyribonucleoside 5'-triphosphate = DNA(n+1) + diphosphate. Functionally, DNA polymerase III is a complex, multichain enzyme responsible for most of the replicative synthesis in bacteria. This DNA polymerase also exhibits 3' to 5' exonuclease activity. This is DNA polymerase III subunit delta' (holB) from Buchnera aphidicola subsp. Acyrthosiphon pisum (strain APS) (Acyrthosiphon pisum symbiotic bacterium).